We begin with the raw amino-acid sequence, 328 residues long: Tyrosine--tRNA ligase (328 aa).

Tyr33 is an L-tyrosine binding site. Positions 38-46 match the 'HIGH' region motif; that stretch reads PSGVLHIGH. Residues Tyr154, Gln158, Asp161, and Gln176 each coordinate L-tyrosine. The tract at residues 193 to 227 is disordered; the sequence is EPPTSLHTPLIADLGTGRGKMSSSEGVTISMEDSR. The short motif at 212-216 is the 'KMSKS' region element; the sequence is KMSSS. Ser215 is an ATP binding site.

The protein belongs to the class-I aminoacyl-tRNA synthetase family. TyrS type 3 subfamily. In terms of assembly, homodimer.

The protein resides in the cytoplasm. It carries out the reaction tRNA(Tyr) + L-tyrosine + ATP = L-tyrosyl-tRNA(Tyr) + AMP + diphosphate + H(+). Its function is as follows. Catalyzes the attachment of tyrosine to tRNA(Tyr) in a two-step reaction: tyrosine is first activated by ATP to form Tyr-AMP and then transferred to the acceptor end of tRNA(Tyr). This Halorubrum lacusprofundi (strain ATCC 49239 / DSM 5036 / JCM 8891 / ACAM 34) protein is Tyrosine--tRNA ligase.